A 306-amino-acid chain; its full sequence is MASQLALKSRIASTGSLEKIFNAQEMIAASHIAQARQLALDSKPYTDAIFDAVQTLVSHTHISHPIVKKDEGNPRVAVLALTADRGMAGAYTSSIIRETEDLLARLEGEGKQPQLYVYGRRGVSYYHYRNRPLAQSWEGDTEKPGVEVANAISRALLKAYMEPVDEGGVAELYIVYTEFINMVVQKVRVLRMLPVEVVKEDKSHLNVPDTTTAPQVRPLYSFEPSLDEVLDTVLPRYVRSRIHECLFEAAASEVACRQNAMHTATENARDLINDLTRKLNASRQASITQELTEIIGSADALNKKEE.

Belongs to the ATPase gamma chain family. In terms of assembly, F-type ATPases have 2 components, CF(1) - the catalytic core - and CF(0) - the membrane proton channel. CF(1) has five subunits: alpha(3), beta(3), gamma(1), delta(1), epsilon(1). CF(0) has three main subunits: a, b and c.

It localises to the cell membrane. Its function is as follows. Produces ATP from ADP in the presence of a proton gradient across the membrane. The gamma chain is believed to be important in regulating ATPase activity and the flow of protons through the CF(0) complex. The chain is ATP synthase gamma chain from Bifidobacterium animalis subsp. lactis (strain AD011).